The chain runs to 176 residues: MKILFCDLLLLSLFSSVSSSCQKDCLVCREKLRPTLDSFSLEMCILECEEKAFTSPLWTPCTKVMARGSWQLSPADPDHVAAALDQPRASEMQHLKRMPRVRSLFQRQKRTEPGLEEVGEIEQKQLQKRFGGFTGARKSARKLANQKRFSEFMRQYLVLSMQSSQRRRTLHQNGNA.

An N-terminal signal peptide occupies residues 1 to 19 (MKILFCDLLLLSLFSSVSS). Propeptides lie at residues 20–95 (SCQK…MQHL) and 169–176 (TLHQNGNA).

It belongs to the opioid neuropeptide precursor family. In terms of processing, specific enzymatic cleavages at paired basic residues probably yield other active peptides besides nociceptin. Post-translationally, the N-terminal domain contains 6 conserved cysteines thought to be involved in disulfide bonding and/or processing.

The protein resides in the secreted. Ligand of the opioid receptor-like receptor OPRL1. It may act as a transmitter in the brain by modulating nociceptive and locomotor behavior. May be involved in neuronal differentiation and development. In terms of biological role, blocks nociceptin action in pain transmission by inhibiting nociceptin-induced hyperalgesia and allodynia. Functionally, has potent analgesic activity. The polypeptide is Prepronociceptin (PNOC) (Bos taurus (Bovine)).